Reading from the N-terminus, the 173-residue chain is MKDLRYPIGQFTYVGTITEEIIDKWIQEIEDLPNELARAIKDLDQKQLDTPYRVGGWTVRQVVHHVVDSHMNSYIRFKLAMTEKNPTIKPYKEEKWAELPDSKLPVDVSLVMLDSLHKRWVNLLYSLEPADLEKTFNHPESGETKLAAAIGLYAWHGRHHTAHITSLRERLNW.

Zn(2+) contacts are provided by H65, H156, and H160.

The protein belongs to the metal hydrolase YfiT family. As to quaternary structure, homodimer. Zn(2+) is required as a cofactor.

The protein resides in the cytoplasm. Possible metal-dependent hydrolase. This chain is Putative metal-dependent hydrolase BcerKBAB4_2443, found in Bacillus mycoides (strain KBAB4) (Bacillus weihenstephanensis).